Reading from the N-terminus, the 244-residue chain is NAD(P)H-quinone oxidoreductase subunit K (244 aa).

[4Fe-4S] cluster is bound by residues C60, C61, C125, and C156. Positions 213–244 are disordered; sequence TSANSIPSSKKEKITELPDNNEKAEIIDTLEN. Over residues 221 to 238 the composition is skewed to basic and acidic residues; the sequence is SKKEKITELPDNNEKAEI.

It belongs to the complex I 20 kDa subunit family. In terms of assembly, NDH-1 can be composed of about 15 different subunits; different subcomplexes with different compositions have been identified which probably have different functions. Requires [4Fe-4S] cluster as cofactor.

Its subcellular location is the cellular thylakoid membrane. The enzyme catalyses a plastoquinone + NADH + (n+1) H(+)(in) = a plastoquinol + NAD(+) + n H(+)(out). The catalysed reaction is a plastoquinone + NADPH + (n+1) H(+)(in) = a plastoquinol + NADP(+) + n H(+)(out). Functionally, NDH-1 shuttles electrons from an unknown electron donor, via FMN and iron-sulfur (Fe-S) centers, to quinones in the respiratory and/or the photosynthetic chain. The immediate electron acceptor for the enzyme in this species is believed to be plastoquinone. Couples the redox reaction to proton translocation, and thus conserves the redox energy in a proton gradient. Cyanobacterial NDH-1 also plays a role in inorganic carbon-concentration. The sequence is that of NAD(P)H-quinone oxidoreductase subunit K from Prochlorococcus marinus (strain MIT 9301).